The primary structure comprises 218 residues: Pyridoxine/pyridoxamine 5'-phosphate oxidase (218 aa).

Substrate contacts are provided by residues 14–17 (RREY) and K72. FMN is bound by residues 67 to 72 (RIVLLK), 82 to 83 (YT), R88, K89, and Q111. Residues Y129, R133, and S137 each coordinate substrate. FMN-binding positions include 146–147 (QS) and W191. 197-199 (RLH) is a substrate binding site. Residue R201 participates in FMN binding.

This sequence belongs to the pyridoxamine 5'-phosphate oxidase family. In terms of assembly, homodimer. The cofactor is FMN.

The enzyme catalyses pyridoxamine 5'-phosphate + O2 + H2O = pyridoxal 5'-phosphate + H2O2 + NH4(+). It carries out the reaction pyridoxine 5'-phosphate + O2 = pyridoxal 5'-phosphate + H2O2. The protein operates within cofactor metabolism; pyridoxal 5'-phosphate salvage; pyridoxal 5'-phosphate from pyridoxamine 5'-phosphate: step 1/1. Its pathway is cofactor metabolism; pyridoxal 5'-phosphate salvage; pyridoxal 5'-phosphate from pyridoxine 5'-phosphate: step 1/1. In terms of biological role, catalyzes the oxidation of either pyridoxine 5'-phosphate (PNP) or pyridoxamine 5'-phosphate (PMP) into pyridoxal 5'-phosphate (PLP). This chain is Pyridoxine/pyridoxamine 5'-phosphate oxidase, found in Citrobacter koseri (strain ATCC BAA-895 / CDC 4225-83 / SGSC4696).